Here is a 456-residue protein sequence, read N- to C-terminus: Bifunctional protein GlmU (456 aa).

The interval 1–228 is pyrophosphorylase; sequence MSARLAAIVL…PQEIFGINDR (228 aa). Residues 10–13, lysine 24, glutamine 75, and 80–81 contribute to the UDP-N-acetyl-alpha-D-glucosamine site; these read LAAG and GT. Residue aspartate 105 participates in Mg(2+) binding. 4 residues coordinate UDP-N-acetyl-alpha-D-glucosamine: glycine 142, glutamate 157, asparagine 172, and asparagine 226. Asparagine 226 lines the Mg(2+) pocket. Residues 229–249 are linker; it reads LQLSQASRILNERTLVGLMLS. Residues 250–456 are N-acetyltransferase; it reads GVTIVDPLRV…KAPYERTEDG (207 aa). The UDP-N-acetyl-alpha-D-glucosamine site is built by arginine 331 and lysine 349. Histidine 361 (proton acceptor) is an active-site residue. UDP-N-acetyl-alpha-D-glucosamine-binding residues include tyrosine 364 and asparagine 375. Acetyl-CoA-binding positions include alanine 378, 384-385, alanine 421, and arginine 437; that span reads NY.

The protein in the N-terminal section; belongs to the N-acetylglucosamine-1-phosphate uridyltransferase family. It in the C-terminal section; belongs to the transferase hexapeptide repeat family. Homotrimer. The cofactor is Mg(2+).

The protein localises to the cytoplasm. The catalysed reaction is alpha-D-glucosamine 1-phosphate + acetyl-CoA = N-acetyl-alpha-D-glucosamine 1-phosphate + CoA + H(+). It carries out the reaction N-acetyl-alpha-D-glucosamine 1-phosphate + UTP + H(+) = UDP-N-acetyl-alpha-D-glucosamine + diphosphate. Its pathway is nucleotide-sugar biosynthesis; UDP-N-acetyl-alpha-D-glucosamine biosynthesis; N-acetyl-alpha-D-glucosamine 1-phosphate from alpha-D-glucosamine 6-phosphate (route II): step 2/2. It participates in nucleotide-sugar biosynthesis; UDP-N-acetyl-alpha-D-glucosamine biosynthesis; UDP-N-acetyl-alpha-D-glucosamine from N-acetyl-alpha-D-glucosamine 1-phosphate: step 1/1. It functions in the pathway bacterial outer membrane biogenesis; LPS lipid A biosynthesis. In terms of biological role, catalyzes the last two sequential reactions in the de novo biosynthetic pathway for UDP-N-acetylglucosamine (UDP-GlcNAc). The C-terminal domain catalyzes the transfer of acetyl group from acetyl coenzyme A to glucosamine-1-phosphate (GlcN-1-P) to produce N-acetylglucosamine-1-phosphate (GlcNAc-1-P), which is converted into UDP-GlcNAc by the transfer of uridine 5-monophosphate (from uridine 5-triphosphate), a reaction catalyzed by the N-terminal domain. This Gloeobacter violaceus (strain ATCC 29082 / PCC 7421) protein is Bifunctional protein GlmU.